Reading from the N-terminus, the 439-residue chain is Paraneoplastic antigen-like protein 8A (439 aa).

The segment at 213 to 439 (ETPNNWNATE…RRATNESRKV (227 aa)) is disordered. Residues 231–249 (LVRRAGAKSRSRRKKQKKN) are compositionally biased toward basic residues. The span at 403 to 419 (KAPQGQQPAEATASTSR) shows a compositional bias: polar residues. Basic and acidic residues predominate over residues 423-439 (AKPEGSPRRATNESRKV).

It belongs to the PNMA family.

The sequence is that of Paraneoplastic antigen-like protein 8A (PNMA8A) from Pongo abelii (Sumatran orangutan).